The primary structure comprises 273 residues: Putative phosphoenolpyruvate synthase regulatory protein (273 aa).

Position 153–160 (153–160 (GVSRSGKT)) interacts with ADP.

This sequence belongs to the pyruvate, phosphate/water dikinase regulatory protein family. PSRP subfamily.

The catalysed reaction is [pyruvate, water dikinase] + ADP = [pyruvate, water dikinase]-phosphate + AMP + H(+). It carries out the reaction [pyruvate, water dikinase]-phosphate + phosphate + H(+) = [pyruvate, water dikinase] + diphosphate. Bifunctional serine/threonine kinase and phosphorylase involved in the regulation of the phosphoenolpyruvate synthase (PEPS) by catalyzing its phosphorylation/dephosphorylation. The chain is Putative phosphoenolpyruvate synthase regulatory protein from Polaromonas sp. (strain JS666 / ATCC BAA-500).